The primary structure comprises 457 residues: Methylenetetrahydrofolate--tRNA-(uracil-5-)-methyltransferase TrmFO (457 aa).

12-17 contributes to the FAD binding site; sequence GGGLAG.

Belongs to the MnmG family. TrmFO subfamily. The cofactor is FAD.

The protein resides in the cytoplasm. The enzyme catalyses uridine(54) in tRNA + (6R)-5,10-methylene-5,6,7,8-tetrahydrofolate + NADH + H(+) = 5-methyluridine(54) in tRNA + (6S)-5,6,7,8-tetrahydrofolate + NAD(+). It catalyses the reaction uridine(54) in tRNA + (6R)-5,10-methylene-5,6,7,8-tetrahydrofolate + NADPH + H(+) = 5-methyluridine(54) in tRNA + (6S)-5,6,7,8-tetrahydrofolate + NADP(+). Catalyzes the folate-dependent formation of 5-methyl-uridine at position 54 (M-5-U54) in all tRNAs. In Myxococcus xanthus (strain DK1622), this protein is Methylenetetrahydrofolate--tRNA-(uracil-5-)-methyltransferase TrmFO.